Reading from the N-terminus, the 906-residue chain is Protein translocase subunit SecA (906 aa).

ATP is bound by residues Q86, 104–108, and D511; that span reads GEGKT. Basic and acidic residues-rich tracts occupy residues 853–865 and 877–888; these read HESV…RHDE and VRREGPKVKRND. Positions 853-906 are disordered; sequence HESVIDNNQRHDEDEQEETPKVQQVRREGPKVKRNDPCPCGSGKKYKQCHGKVE. 4 residues coordinate Zn(2+): C890, C892, C901, and H902. A compositionally biased stretch (basic residues) spans 896-906; it reads KKYKQCHGKVE.

Belongs to the SecA family. In terms of assembly, monomer and homodimer. Part of the essential Sec protein translocation apparatus which comprises SecA, SecYEG and auxiliary proteins SecDF-YajC and YidC. It depends on Zn(2+) as a cofactor.

Its subcellular location is the cell inner membrane. The protein resides in the cytoplasm. The enzyme catalyses ATP + H2O + cellular proteinSide 1 = ADP + phosphate + cellular proteinSide 2.. Its function is as follows. Part of the Sec protein translocase complex. Interacts with the SecYEG preprotein conducting channel. Has a central role in coupling the hydrolysis of ATP to the transfer of proteins into and across the cell membrane, serving both as a receptor for the preprotein-SecB complex and as an ATP-driven molecular motor driving the stepwise translocation of polypeptide chains across the membrane. This chain is Protein translocase subunit SecA, found in Francisella tularensis subsp. novicida (strain U112).